The primary structure comprises 253 residues: UDP-Glc:alpha-D-GlcNAc-diphosphoundecaprenol beta-1,3-glucosyltransferase WfgD (253 aa).

This sequence belongs to the glycosyltransferase 2 family. Mn(2+) serves as cofactor. It depends on Mg(2+) as a cofactor.

Its subcellular location is the cell inner membrane. The catalysed reaction is N-acetyl-alpha-D-glucosaminyl-di-trans,octa-cis-undecaprenyl diphosphate + UDP-alpha-D-glucose = beta-D-Glc-(1-&gt;3)-alpha-D-GlcNAc-di-trans,octa-cis-undecaprenyl diphosphate + UDP + H(+). The protein operates within bacterial outer membrane biogenesis; lipopolysaccharide biosynthesis. Functionally, catalyzes the addition of Glc, the second sugar moiety of the O152-antigen repeating unit, to GlcNAc-pyrophosphate-undecaprenol. This chain is UDP-Glc:alpha-D-GlcNAc-diphosphoundecaprenol beta-1,3-glucosyltransferase WfgD (wfgD), found in Escherichia coli.